Reading from the N-terminus, the 356-residue chain is Growth hormone-regulated TBC protein 1-A (356 aa).

The disordered stretch occupies residues 1-29; that stretch reads MEERDRTGRTGQPQHRINQPSTARERANS. The span at 9–22 shows a compositional bias: polar residues; it reads RTGQPQHRINQPST. A Rab-GAP TBC domain is found at 87–277; sequence GVPNEHRPLV…RIWDCLFYEG (191 aa).

In terms of biological role, may act as a GTPase-activating protein for Rab family protein(s). The polypeptide is Growth hormone-regulated TBC protein 1-A (grtp1a) (Danio rerio (Zebrafish)).